Here is a 509-residue protein sequence, read N- to C-terminus: Probable cation transporter HKT2;3 (509 aa).

Residues 1–32 (MPIRLHIFVNSARHAINSSAFICRFIAYHLSP) lie on the Cytoplasmic side of the membrane. A run of 2 helical transmembrane segments spans residues 33–53 (LLIH…SLVV) and 96–116 (ILTL…GLVL). The Cytoplasmic segment spans residues 117-164 (ESSKQNKHDPENRRVSSVTVCKQSQLEEATPQTPSMNSIDIKKRCLKY). Helical transmembrane passes span 165-185 (LVFV…LLVF) and 237-257 (GLLL…PVFL). At 258-296 (RLVIWALRGLRLAKAEEPDFMMNNSSAVGFSHLLPNLQT) the chain is on the cytoplasmic side. The next 2 membrane-spanning stretches (helical) occupy residues 297–317 (IFLA…FCCL) and 353–373 (CSLV…TPSL). Over 374–400 (TKLFSACQDHKRIGPESDDRTSKGKPF) the chain is Cytoplasmic. A run of 2 helical transmembrane segments spans residues 401 to 421 (LKMM…LVCI) and 474 to 494 (AYNF…LAML). Over 495–509 (CGRLNSKDSTSARTR) the chain is Cytoplasmic.

This sequence belongs to the TrkH potassium transport family. HKT (TC 2.A.38.3) subfamily.

It localises to the membrane. Its function is as follows. Probable cation transporter. May be involved in regulation of potassium-sodium homeostasis. This Oryza sativa subsp. japonica (Rice) protein is Probable cation transporter HKT2;3.